Consider the following 833-residue polypeptide: Leucine--tRNA ligase (833 aa).

Residues 41-52 (PYPSGAGLHVGH) carry the 'HIGH' region motif. The 'KMSKS' region motif lies at 610–614 (KMSKS). ATP is bound at residue Lys613.

Belongs to the class-I aminoacyl-tRNA synthetase family.

It is found in the cytoplasm. It carries out the reaction tRNA(Leu) + L-leucine + ATP = L-leucyl-tRNA(Leu) + AMP + diphosphate. This Streptococcus pyogenes serotype M6 (strain ATCC BAA-946 / MGAS10394) protein is Leucine--tRNA ligase.